Here is a 201-residue protein sequence, read N- to C-terminus: Recombination protein RecR (201 aa).

The segment at 60–75 adopts a C4-type zinc-finger fold; that stretch reads CETCGNIDTRSPCTIC. Residues 83–178 form the Toprim domain; sequence SIIVVVADVA…KVTRLAHGVP (96 aa).

It belongs to the RecR family.

In terms of biological role, may play a role in DNA repair. It seems to be involved in an RecBC-independent recombinational process of DNA repair. It may act with RecF and RecO. The polypeptide is Recombination protein RecR (Nitrobacter winogradskyi (strain ATCC 25391 / DSM 10237 / CIP 104748 / NCIMB 11846 / Nb-255)).